A 161-amino-acid chain; its full sequence is Protein PLASTID TRANSCRIPTIONALLY ACTIVE 7 (161 aa).

Residues methionine 1–serine 32 constitute a chloroplast transit peptide.

As to quaternary structure, component of the transcriptionally active chromosome (TAC) complexes. Interacts with FLN1, PTAC10, PTAC12/HMR/PAP5 and PTAC14. Binds to SL1/MTERF3. Mostly expressed in leaves, flowers and seedlings, and, to a lower extent, in roots and stems.

The protein localises to the plastid. It is found in the chloroplast. In terms of biological role, essential for chloroplast development, especially for thylakoid formation. Involved in plastid gene expression, probably by maintaining plastid-encoded RNA polymerase (PEP) activity. This Arabidopsis thaliana (Mouse-ear cress) protein is Protein PLASTID TRANSCRIPTIONALLY ACTIVE 7.